The sequence spans 1223 residues: MNSILSRLFRDVTGDEEYAVNSLRDANRLIIIDTDTGTRRLLEHVSNFRRFLNTIRSDAAGACARHQRAARHDDEEEAPPAARVSFAGHSLVLENNDFCVFVKPFLLKRHYDEIKNYLKLDRFFKSDNPEHTNMCVQAGDYCYWPNWPASQAVSFTGWQLYLYVEFGIVVESTVPIIHNRRLGPVDLFVFNPRTFLNIEMNLSTNEAPPVKLFVNGKFDFEKKVAESGKAVESLFEIKMANGATATCKMIANLVNSNKNLFEVIRDNINLEECVTTPKYRHIIDVNLTKLRQFAHDGAVLAPPVERAFRAPTVTTILSASSENAEVIQSEIDAALVKVREGMVKVMAEFNRSDDPDLLQAYFKESGFKNFHFLLFNVWKQITKRDKKSFRETDMKLFFELVCETLFGNDSDALATALVKCEPFTTRGVATFNSLCDHWHCFKGVNPYTLLGSYYGAHYFIYLKLTSSDAHECDDPWAFNYKNAMECKVPPKALGEAFFIKVENVVTQVTLVFNGEHYQIVKKDDELYKLVETNPYKLQNIKFNNWKYMYHTKYGVYNVVTDDFYSNCPFLLGTTMPGTFKRPDDPPYLPEAVFAHMLATSAEERDILRTYHIAKLCRDVKMVKVNLGTVNLLGDCAPCKLDARLRLNDLFRELWNLDDDSLVTLALYVNKLRVEDIVHNFKCGACRASVQERKCRCVQKIKINRQALKTCLIFDLFVGDPELTQLMWMLIFATNKLYINTALIVTTSKLVAQHAHFFTKEHIKIAAILHRDLHKIEFVDTLMADVCNHDAFLAYLQHAVANEPAAAPAADNAVAKFYAHYANAANILHKYKNLWWDKIILARDSDTLSSWLTRFYLRVILSKMDVQNYPVAYLTQVVEGYLYFKRYTNFNHASSYMLMHFAASLSVPTDYGRKAVYLPGVPLSGKSTFFELLDFLVLMHKFDDDTHTGASKETSDKEVSNLNSEVYTINELKKCSESFFKKHADSSKSDSKSRKYQGLLKYEANYKMLIVNNNPLYVDDYDDGVQNRFLIVYTDHKFLPHVRFSGSVYHHILTKQYPQEPMVVDALKDSVRVFLAHVVRYQREPQTGLVPYKTLLDSDPVHQHNLTRLSVNNSPMYAVIYILNIKTAPRSANTFVTEEKMQEMIGYATLHLKSFLHPSFTQYNAAKNINAGTARSFVFDEKILLQQIKDKFKNNYDERGCKFNNLTMALNKLDININVPQFKC.

Residues 692–701 carry the Nuclear localization signal motif; that stretch reads RKCRCVQKIK. 919–926 contacts ATP; sequence GVPLSGKS. A DNA-binding region (H-T-H motif) is located at residues 967–981; that stretch reads TINELKKCSESFFKK.

The protein resides in the host nucleus. It carries out the reaction ATP + H2O = ADP + phosphate + H(+). Its function is as follows. Essential for the initiation of viral DNA replication, it may contribute to other functions such as controlling the switch to the late phase and leading to the inhibition of host protein synthesis. Required for late and very late gene expression. This chain is ATP-dependent DNA helicase P143 (P143), found in Orgyia pseudotsugata multicapsid polyhedrosis virus (OpMNPV).